A 220-amino-acid chain; its full sequence is HTH-type transcriptional repressor KstR (220 aa).

The HTH tetR-type domain occupies 36–96 (RERRKRILDA…SALGREFSRI (61 aa)). A DNA-binding region (H-T-H motif) is located at residues 59–78 (QMRAVADRADVAVGTLYRYF).

In terms of assembly, homodimer.

Functionally, controls the expression of genes used for utilizing diverse lipids as energy sources. This is HTH-type transcriptional repressor KstR (kstR) from Mycobacterium tuberculosis (strain ATCC 25618 / H37Rv).